Reading from the N-terminus, the 410-residue chain is Probable serine/threonine-protein kinase PBL9 (410 aa).

Glycine 2 is lipidated: N-myristoyl glycine. Residue cysteine 4 is the site of S-palmitoyl cysteine attachment. The interval 11-46 (AESSGASTKYDAKDIGSLGSKASSVSVRPSPRTEGE) is disordered. The Protein kinase domain maps to 68–352 (FRPDSVLGEG…MSEVVSHLEH (285 aa)). Residues 74–82 (LGEGGFGCV) and lysine 106 contribute to the ATP site. At tyrosine 151 the chain carries Phosphotyrosine. Aspartate 203 acts as the Proton acceptor in catalysis. 2 positions are modified to phosphoserine: serine 207 and serine 237. A phosphothreonine mark is found at threonine 238 and threonine 243. Tyrosine 251 carries the post-translational modification Phosphotyrosine.

Belongs to the protein kinase superfamily. Ser/Thr protein kinase family. Interacts with the Xanthomonas campestris effector XopAC/AvrAC. Expressed in stomatal guard cells of leaves.

It is found in the cell membrane. The catalysed reaction is L-seryl-[protein] + ATP = O-phospho-L-seryl-[protein] + ADP + H(+). It catalyses the reaction L-threonyl-[protein] + ATP = O-phospho-L-threonyl-[protein] + ADP + H(+). In terms of biological role, possible bi-functional kinase. In vitro, it exhibits serine/threonine activity. In vivo, can phosphorylate tyrosine residues of limited substrates. May be involved in plant defense signaling. This Arabidopsis thaliana (Mouse-ear cress) protein is Probable serine/threonine-protein kinase PBL9.